Reading from the N-terminus, the 108-residue chain is Replication restart protein PriB (108 aa).

An SSB domain is found at 8–108; sequence IDNSFSVMGV…LHAEQIEFID (101 aa).

It belongs to the PriB family. In terms of assembly, homodimer. Interacts with PriA and DnaT. Component of the replication restart primosome. Primosome assembly occurs via a 'hand-off' mechanism. PriA binds to replication forks, subsequently PriB then DnaT bind; DnaT then displaces ssDNA to generate the helicase loading substrate.

In terms of biological role, involved in the restart of stalled replication forks, which reloads the replicative helicase on sites other than the origin of replication; the PriA-PriB pathway is the major replication restart pathway. During primosome assembly it facilitates complex formation between PriA and DnaT on DNA; stabilizes PriA on DNA. Stimulates the DNA unwinding activity of PriA helicase. The chain is Replication restart protein PriB from Haemophilus influenzae (strain ATCC 51907 / DSM 11121 / KW20 / Rd).